We begin with the raw amino-acid sequence, 371 residues long: MKKRKTVKKRYVIALVIVIAGLITLWRILNAPVPTYQTLIVRPGDLQQSVLATGKLDALRKVDVGAQVSGQLKTLSVAIGDKVKKDQLLGVIDPEQAENQIKEVEATLMELRAQRQQAEAELKLARVTYSRQQRLAQTQAVSLQDLDTAATEMAVKQAQIGTIDAQIKRNQASLDTAKTNLDYTRIVAPMAGEVTQITTLQGQTVIAAQQAPNILTLADMSTMLVKAQVSEADVIHLKPGQKAWFTVLGDPLTRYEGQIKDVLPTPEKVNDAIFYYARFEVPNPNGLLRLDMTAQVHIQLTDVKNVLTIPLSALGDPVGDNRYKVKLLRNGETREREVTIGARNDTDVEIVKGLEAGDEVVIGEAKPGAAQ.

Residues Met1–Arg10 are Cytoplasmic-facing. A helical membrane pass occupies residues Tyr11–Ala31. The Periplasmic portion of the chain corresponds to Pro32–Gln371. A coiled-coil region spans residues Ile92–Gln137.

The protein belongs to the membrane fusion protein (MFP) (TC 8.A.1) family. Homohexamer. Part of the tripartite efflux system MacAB-TolC, which is composed of an inner membrane transporter, MacB, a periplasmic membrane fusion protein, MacA, and an outer membrane component, TolC. The complex forms a large protein conduit and can translocate molecules across both the inner and outer membranes. MacA interacts with MacB and TolC.

It localises to the cell inner membrane. Functionally, part of the tripartite efflux system MacAB-TolC. MacA stimulates the ATPase activity of MacB by promoting the closed ATP-bound state of MacB, increases the capacity of MacB to bind macrolides such as erythromycin, and provides a physical link between MacB and TolC. Confers resistance against macrolides. This is Macrolide export protein MacA (macA) from Escherichia coli O157:H7.